Reading from the N-terminus, the 465-residue chain is Lactaldehyde dehydrogenase (465 aa).

220-225 (GSVEVG) is a binding site for NAD(+). Residues Glu240 and Cys274 contribute to the active site.

Belongs to the aldehyde dehydrogenase family. In terms of assembly, homotetramer.

It carries out the reaction (S)-lactaldehyde + NAD(+) + H2O = (S)-lactate + NADH + 2 H(+). The protein operates within cofactor biosynthesis; coenzyme F420 biosynthesis. In terms of biological role, involved in F420 biosynthesis through the oxidation of lactaldehyde to lactate. The chain is Lactaldehyde dehydrogenase from Methanococcus aeolicus (strain ATCC BAA-1280 / DSM 17508 / OCM 812 / Nankai-3).